The primary structure comprises 374 residues: tRNA-specific 2-thiouridylase MnmA (374 aa).

ATP is bound by residues Gly12 to Ser19 and Met38. The interaction with target base in tRNA stretch occupies residues Asn98 to Asp100. Catalysis depends on Cys103, which acts as the Nucleophile. Cys103 and Cys202 are joined by a disulfide. Gly128 is an ATP binding site. An interaction with tRNA region spans residues Lys152–Gln154. The active-site Cysteine persulfide intermediate is the Cys202. The segment at Arg316–Tyr317 is interaction with tRNA.

This sequence belongs to the MnmA/TRMU family.

It localises to the cytoplasm. The catalysed reaction is S-sulfanyl-L-cysteinyl-[protein] + uridine(34) in tRNA + AH2 + ATP = 2-thiouridine(34) in tRNA + L-cysteinyl-[protein] + A + AMP + diphosphate + H(+). Its function is as follows. Catalyzes the 2-thiolation of uridine at the wobble position (U34) of tRNA, leading to the formation of s(2)U34. The polypeptide is tRNA-specific 2-thiouridylase MnmA (Vibrio campbellii (strain ATCC BAA-1116)).